Reading from the N-terminus, the 263-residue chain is Putative methyltransferase DDB_G0268948 (263 aa).

It belongs to the methyltransferase superfamily.

This is Putative methyltransferase DDB_G0268948 from Dictyostelium discoideum (Social amoeba).